The sequence spans 742 residues: Catalase-peroxidase (742 aa).

Residues 1 to 43 are disordered; it reads MSDSCPVAHEGNTQSTSESENPVIPSPTPAANRPRNNRDWWPN. A compositionally biased stretch (polar residues) spans 11–20; it reads GNTQSTSESE. The segment at residues 109–231 is a cross-link (tryptophyl-tyrosyl-methioninium (Trp-Tyr) (with M-257)); it reads WHAAGTYRIA…LGAVQMGLIY (123 aa). Histidine 110 functions as the Proton acceptor in the catalytic mechanism. The segment at residues 231–257 is a cross-link (tryptophyl-tyrosyl-methioninium (Tyr-Met) (with W-109)); it reads YVNPEGPNGQPDPLAAARDIRETFSRM. A heme b-binding site is contributed by histidine 272.

The protein belongs to the peroxidase family. Peroxidase/catalase subfamily. Homodimer or homotetramer. The cofactor is heme b. Post-translationally, formation of the three residue Trp-Tyr-Met cross-link is important for the catalase, but not the peroxidase activity of the enzyme.

The enzyme catalyses H2O2 + AH2 = A + 2 H2O. The catalysed reaction is 2 H2O2 = O2 + 2 H2O. Bifunctional enzyme with both catalase and broad-spectrum peroxidase activity. The polypeptide is Catalase-peroxidase (Rhodococcus jostii (strain RHA1)).